Here is a 209-residue protein sequence, read N- to C-terminus: APC/C-CDH1 modulator 1 (209 aa).

Residues 1–38 form a disordered region; it reads MISPSKKRTILSSKNINQKPRAVVKGNELRSPSKRRSQ. The residue at position 48 (Ser-48) is a Phosphoserine. Residue Thr-161 is modified to Phosphothreonine. Position 202 is a phosphoserine (Ser-202).

In terms of assembly, interacts with CDH1, BMH1 and BMH2.

Functionally, negative regulator of GDH1, the activator protein that regulates the ubiquitin ligase activity and substrate specificity of the anaphase promoting complex/cyclosome (APC/C), and which is required for exit from mitosis, cytokinesis and formation of prereplicative complexes in G1. In Saccharomyces cerevisiae (strain ATCC 204508 / S288c) (Baker's yeast), this protein is APC/C-CDH1 modulator 1 (ACM1).